The sequence spans 348 residues: MHLPPAAAVGLLLLLLPPPARVASRKPTMCQRCRALVDKFNQGMANTARKNFGGGNTAWEEKSLSKYEFSEIRLLEIMEGLCDSNDFECNQLLEQHEEQLEAWWQTLKKECPNLFEWFCVHTLKACCLPGTYGPDCQECQGGSQRPCSGNGHCDGDGSRQGDGSCQCHVGYKGPLCIDCMDGYFSLLRNETHSFCTACDESCKTCSGPTNKGCVECEVGWTRVEDACVDVDECAAETPPCSNVQYCENVNGSYTCEECDSTCVGCTGKGPANCKECISGYSKQKGECADIDECSLETKVCKKENENCYNTPGSFVCVCPEGFEEDRRCLCTDSRRRSGRGKSHTATLP.

Positions 1–22 are cleaved as a signal peptide; the sequence is MHLPPAAAVGLLLLLLPPPARV. Positions 30–33 match the CXXC motif; the sequence is CQRC. Cystine bridges form between C30/C33, C139/C153, C147/C165, and C167/C176. Positions 135 to 177 constitute an EGF-like 1 domain; sequence DCQECQGGSQRPCSGNGHCDGDGSRQGDGSCQCHVGYKGPLCI. The FU 1 repeat unit spans residues 192-239; the sequence is HSFCTACDESCKTCSGPTNKGCVECEVGWTRVEDACVDVDECAAETPP. The N-linked (GlcNAc...) asparagine glycan is linked to N250. The FU 2 repeat unit spans residues 252–299; that stretch reads SYTCEECDSTCVGCTGKGPANCKECISGYSKQKGECADIDECSLETKV. Positions 262-265 match the CXXC motif; that stretch reads CVGC. Intrachain disulfides connect C262/C265, C293/C307, C300/C316, and C318/C328. The EGF-like 2; calcium-binding domain occupies 289-329; sequence DIDECSLETKVCKKENENCYNTPGSFVCVCPEGFEEDRRCL.

Belongs to the CRELD family. Interacts with CHRNA4. Component of a complex containing at least CRELD2, MANF, MATN3 and PDIA4.

Its subcellular location is the endoplasmic reticulum. The catalysed reaction is Catalyzes the rearrangement of -S-S- bonds in proteins.. Functionally, protein disulfide isomerase. Might play a role in the unfolded protein response. May regulate transport of alpha4-beta2 neuronal acetylcholine receptor. In Cricetulus griseus (Chinese hamster), this protein is Protein disulfide isomerase CRELD2 (CRELD2).